A 472-amino-acid polypeptide reads, in one-letter code: Clampless protein 1 (472 aa).

Residues Asn-70 and Asn-296 are each glycosylated (N-linked (GlcNAc...) asparagine).

Required for developmental progression after cells of opposite mating types fuse with one another, essential for processes common to both dikaryotic filament formation and monokaryotic fruiting. A direct target for transcription factors Sxi1-alpha and Sxi2-a. The polypeptide is Clampless protein 1 (Cryptococcus neoformans var. neoformans serotype D (strain B-3501A) (Filobasidiella neoformans)).